Here is a 125-residue protein sequence, read N- to C-terminus: Small ribosomal subunit protein uS12 (125 aa).

The interval 1–23 (MATVNQLVRKGRTKRTAKSSVPA) is disordered. At Asp89 the chain carries 3-methylthioaspartic acid. The disordered stretch occupies residues 102–125 (ADTAGVDKRRQGRSKYGAKRPKKK). Over residues 111 to 125 (RQGRSKYGAKRPKKK) the composition is skewed to basic residues.

Belongs to the universal ribosomal protein uS12 family. Part of the 30S ribosomal subunit. Contacts proteins S8 and S17. May interact with IF1 in the 30S initiation complex.

With S4 and S5 plays an important role in translational accuracy. In terms of biological role, interacts with and stabilizes bases of the 16S rRNA that are involved in tRNA selection in the A site and with the mRNA backbone. Located at the interface of the 30S and 50S subunits, it traverses the body of the 30S subunit contacting proteins on the other side and probably holding the rRNA structure together. The combined cluster of proteins S8, S12 and S17 appears to hold together the shoulder and platform of the 30S subunit. In Halorhodospira halophila (strain DSM 244 / SL1) (Ectothiorhodospira halophila (strain DSM 244 / SL1)), this protein is Small ribosomal subunit protein uS12.